The primary structure comprises 115 residues: Holo-[acyl-carrier-protein] synthase (115 aa).

The Mg(2+) site is built by Asp-6 and Glu-51.

Belongs to the P-Pant transferase superfamily. AcpS family. Requires Mg(2+) as cofactor.

The protein resides in the cytoplasm. It carries out the reaction apo-[ACP] + CoA = holo-[ACP] + adenosine 3',5'-bisphosphate + H(+). Transfers the 4'-phosphopantetheine moiety from coenzyme A to a Ser of acyl-carrier-protein. The sequence is that of Holo-[acyl-carrier-protein] synthase from Campylobacter jejuni subsp. jejuni serotype O:23/36 (strain 81-176).